Reading from the N-terminus, the 200-residue chain is Ribosome maturation factor RimM (200 aa).

Positions 103–181 (KEGEYYFYQL…KIVAKRLEYL (79 aa)) constitute a PRC barrel domain.

It belongs to the RimM family. Binds ribosomal protein uS19.

Its subcellular location is the cytoplasm. In terms of biological role, an accessory protein needed during the final step in the assembly of 30S ribosomal subunit, possibly for assembly of the head region. Essential for efficient processing of 16S rRNA. May be needed both before and after RbfA during the maturation of 16S rRNA. It has affinity for free ribosomal 30S subunits but not for 70S ribosomes. The polypeptide is Ribosome maturation factor RimM (Kosmotoga olearia (strain ATCC BAA-1733 / DSM 21960 / TBF 19.5.1)).